Here is a 209-residue protein sequence, read N- to C-terminus: Large ribosomal subunit protein uL3 (209 aa).

Glutamine 150 is subject to N5-methylglutamine.

The protein belongs to the universal ribosomal protein uL3 family. As to quaternary structure, part of the 50S ribosomal subunit. Forms a cluster with proteins L14 and L19. Methylated by PrmB.

In terms of biological role, one of the primary rRNA binding proteins, it binds directly near the 3'-end of the 23S rRNA, where it nucleates assembly of the 50S subunit. This is Large ribosomal subunit protein uL3 from Citrobacter koseri (strain ATCC BAA-895 / CDC 4225-83 / SGSC4696).